The following is a 488-amino-acid chain: Glutamyl-tRNA(Gln) amidotransferase subunit A (488 aa).

Active-site charge relay system residues include Lys77 and Ser152. Ser176 (acyl-ester intermediate) is an active-site residue.

The protein belongs to the amidase family. GatA subfamily. Heterotrimer of A, B and C subunits.

The enzyme catalyses L-glutamyl-tRNA(Gln) + L-glutamine + ATP + H2O = L-glutaminyl-tRNA(Gln) + L-glutamate + ADP + phosphate + H(+). Allows the formation of correctly charged Gln-tRNA(Gln) through the transamidation of misacylated Glu-tRNA(Gln) in organisms which lack glutaminyl-tRNA synthetase. The reaction takes place in the presence of glutamine and ATP through an activated gamma-phospho-Glu-tRNA(Gln). This chain is Glutamyl-tRNA(Gln) amidotransferase subunit A, found in Streptococcus pyogenes serotype M4 (strain MGAS10750).